We begin with the raw amino-acid sequence, 673 residues long: DNA ligase (673 aa).

NAD(+) is bound by residues 32–36 (DHVYD), 81–82 (SL), and Glu-111. Lys-113 serves as the catalytic N6-AMP-lysine intermediate. NAD(+) is bound by residues Arg-134, Glu-171, Lys-286, and Lys-310. Zn(2+) contacts are provided by Cys-404, Cys-407, Cys-422, and Cys-428. The region spanning 595–673 (NIIDEYKNKT…NEFWKKDNNF (79 aa)) is the BRCT domain.

Belongs to the NAD-dependent DNA ligase family. LigA subfamily. It depends on Mg(2+) as a cofactor. Requires Mn(2+) as cofactor.

The catalysed reaction is NAD(+) + (deoxyribonucleotide)n-3'-hydroxyl + 5'-phospho-(deoxyribonucleotide)m = (deoxyribonucleotide)n+m + AMP + beta-nicotinamide D-nucleotide.. Its function is as follows. DNA ligase that catalyzes the formation of phosphodiester linkages between 5'-phosphoryl and 3'-hydroxyl groups in double-stranded DNA using NAD as a coenzyme and as the energy source for the reaction. It is essential for DNA replication and repair of damaged DNA. The polypeptide is DNA ligase (Ureaplasma parvum serovar 3 (strain ATCC 27815 / 27 / NCTC 11736)).